Here is a 337-residue protein sequence, read N- to C-terminus: Thymidylate synthase (337 aa).

DUMP-binding positions include Arg-74 and 199 to 200; that span reads RR. Cys-219 (nucleophile) is an active-site residue. Residues 239–242, Asn-250, and 280–282 contribute to the dUMP site; these read RSGD and HIY. Residue Asp-242 participates in (6R)-5,10-methylene-5,6,7,8-tetrahydrofolate binding. Ala-336 provides a ligand contact to (6R)-5,10-methylene-5,6,7,8-tetrahydrofolate.

The protein belongs to the thymidylate synthase family. As to quaternary structure, homodimer.

The enzyme catalyses dUMP + (6R)-5,10-methylene-5,6,7,8-tetrahydrofolate = 7,8-dihydrofolate + dTMP. The protein operates within pyrimidine metabolism; dTTP biosynthesis. The protein is Thymidylate synthase (70) of Homo sapiens (Human).